A 481-amino-acid chain; its full sequence is Glucan endo-1,3-beta-glucosidase 8 (481 aa).

An N-terminal signal peptide occupies residues 1-33 (MSNLLALVVGFVIVIGHLGILVNGLGVNWGTMA). 2 N-linked (GlcNAc...) asparagine glycosylation sites follow: Asn-99 and Asn-110. Glu-119 (proton donor) is an active-site residue. N-linked (GlcNAc...) asparagine glycosylation is found at Asn-126 and Asn-131. The Nucleophile role is filled by Glu-265. Cys-367 and Cys-428 form a disulfide bridge. N-linked (GlcNAc...) asparagine glycans are attached at residues Asn-409 and Asn-440. Ser-455 is lipidated: GPI-anchor amidated serine. A propeptide spans 456–481 (SASSFSCSSYSLVVLIVWFLLSGMMF) (removed in mature form).

This sequence belongs to the glycosyl hydrolase 17 family. Contains two additional disulfide bonds.

It is found in the secreted. The protein resides in the cell wall. Its subcellular location is the cell membrane. The catalysed reaction is Hydrolysis of (1-&gt;3)-beta-D-glucosidic linkages in (1-&gt;3)-beta-D-glucans.. The chain is Glucan endo-1,3-beta-glucosidase 8 from Arabidopsis thaliana (Mouse-ear cress).